A 590-amino-acid chain; its full sequence is Arginine--tRNA ligase (590 aa).

A 'HIGH' region motif is present at residues 130-140; that stretch reads PNIAKEMHVGH.

This sequence belongs to the class-I aminoacyl-tRNA synthetase family. Monomer.

The protein localises to the cytoplasm. It catalyses the reaction tRNA(Arg) + L-arginine + ATP = L-arginyl-tRNA(Arg) + AMP + diphosphate. This chain is Arginine--tRNA ligase, found in Synechococcus sp. (strain CC9311).